The chain runs to 166 residues: Protein SprT (166 aa).

The SprT-like domain occupies 19–164 (REHLAKANLK…CVHCGDLLVA (146 aa)). Residue histidine 78 coordinates Zn(2+). Glutamate 79 is a catalytic residue. Residue histidine 82 coordinates Zn(2+).

Belongs to the SprT family. It depends on Zn(2+) as a cofactor.

It is found in the cytoplasm. This is Protein SprT from Klebsiella pneumoniae (strain 342).